A 657-amino-acid polypeptide reads, in one-letter code: DNA ligase (657 aa).

Residue 80–81 participates in NAD(+) binding; the sequence is SL. The active-site N6-AMP-lysine intermediate is the Lys-104. Residues Arg-125, Glu-159, and Lys-297 each contribute to the NAD(+) site. Zn(2+) contacts are provided by Cys-386, Cys-389, Cys-406, and Cys-411. The BRCT domain maps to 571–657; it reads QSEQIFENLN…EWLNNGVRPE (87 aa).

This sequence belongs to the NAD-dependent DNA ligase family. LigA subfamily. The cofactor is Mg(2+). Requires Mn(2+) as cofactor.

The enzyme catalyses NAD(+) + (deoxyribonucleotide)n-3'-hydroxyl + 5'-phospho-(deoxyribonucleotide)m = (deoxyribonucleotide)n+m + AMP + beta-nicotinamide D-nucleotide.. In terms of biological role, DNA ligase that catalyzes the formation of phosphodiester linkages between 5'-phosphoryl and 3'-hydroxyl groups in double-stranded DNA using NAD as a coenzyme and as the energy source for the reaction. It is essential for DNA replication and repair of damaged DNA. The sequence is that of DNA ligase from Ruminiclostridium cellulolyticum (strain ATCC 35319 / DSM 5812 / JCM 6584 / H10) (Clostridium cellulolyticum).